Reading from the N-terminus, the 689-residue chain is Putative pentatricopeptide repeat-containing protein At3g15130 (689 aa).

PPR repeat units lie at residues 5–39 (QRQN…GSGL), 40–70 (NLIT…MPER), 71–105 (NVVS…GIYP), 106–140 (NEFT…GFEM), 141–171 (MVEV…IVDR), 172–206 (SLIS…NIKE), 209–243 (DEFT…GFHC), 246–276 (SATI…IKEK), 277–311 (TMIS…NSQI), 312–342 (DSFA…AVKL), 347–377 (ETSV…MQLK), 378–412 (DVIS…NIEP), 413–448 (DEVC…GIKP), and 449–479 (RVEH…MPIK). The interval 484–559 (IWQTLLSLCR…EAGMSWVEIE (76 aa)) is type E motif. The interval 560-590 (REVHFFRSGEDSHPLTPVIQETLKEAERRLR) is type E(+) motif. The tract at residues 592–689 (ELGYVYGLKH…DGCCSCGDYW (98 aa)) is type DYW motif.

The protein belongs to the PPR family. PCMP-H subfamily.

This Arabidopsis thaliana (Mouse-ear cress) protein is Putative pentatricopeptide repeat-containing protein At3g15130 (PCMP-H86).